The primary structure comprises 263 residues: 4-hydroxy-2-oxo-heptane-1,7-dioate aldolase (263 aa).

The Proton acceptor role is filled by His-45. Gln-147 contacts substrate. Glu-149 provides a ligand contact to a divalent metal cation. Positions 174 and 175 each coordinate substrate. Position 175 (Asp-175) interacts with a divalent metal cation.

This sequence belongs to the HpcH/HpaI aldolase family. Homohexamer; trimer of dimers. A divalent metal cation serves as cofactor.

It catalyses the reaction 4-hydroxy-2-oxoheptanedioate = succinate semialdehyde + pyruvate. The protein operates within aromatic compound metabolism; 4-hydroxyphenylacetate degradation; pyruvate and succinate semialdehyde from 4-hydroxyphenylacetate: step 7/7. Its function is as follows. Catalyzes the reversible retro-aldol cleavage of 4-hydroxy-2-ketoheptane-1,7-dioate (HKHD) to pyruvate and succinic semialdehyde. This chain is 4-hydroxy-2-oxo-heptane-1,7-dioate aldolase, found in Salmonella paratyphi A (strain ATCC 9150 / SARB42).